The following is a 167-amino-acid chain: MNQLDQYSQPMQHLILLWFWLLDLSPPPSFHLSVKSVDLSLFSLSPLFLLLSISSLIFSRVNKFGIRRVGYAMAPKPDPTVLPDLQEKKAILGTQIEMITQAMTTLESRVTDLQQESNDHRTWVREALDKLLKRDLGDENRPKPTTNKMIATGEQHKGEVSTSLFHD.

The helical transmembrane segment at 39–59 threads the bilayer; it reads LSLFSLSPLFLLLSISSLIFS. Positions 92-122 form a coiled coil; it reads LGTQIEMITQAMTTLESRVTDLQQESNDHRT. The disordered stretch occupies residues 134–167; sequence RDLGDENRPKPTTNKMIATGEQHKGEVSTSLFHD. Residues 154–167 are compositionally biased toward basic and acidic residues; it reads EQHKGEVSTSLFHD.

The protein localises to the mitochondrion membrane. This is an uncharacterized protein from Arabidopsis thaliana (Mouse-ear cress).